We begin with the raw amino-acid sequence, 248 residues long: Amphiregulin (248 aa).

The N-terminal stretch at 1–26 is a signal peptide; the sequence is MRTPLLPLARSVLLLLVLGSGHYAAA. Positions 27–99 are excised as a propeptide; sequence LELNDPSSGK…IIDDSVRVEQ (73 aa). Disordered regions lie at residues 29 to 48, 57 to 77, and 100 to 136; these read LNDPSSGKGESLSGDHSAGG, VSTISEMPSGSELSTGDYDYS, and VIKPKKNKTEGEKSTEKPKRKKKGGKNGKGRRNKKKK. Residues 58-70 are compositionally biased toward polar residues; that stretch reads STISEMPSGSELS. A compositionally biased stretch (basic and acidic residues) spans 100–116; sequence VIKPKKNKTEGEKSTEK. Residue N106 is glycosylated (N-linked (GlcNAc...) asparagine). A compositionally biased stretch (basic residues) spans 117–136; it reads PKRKKKGGKNGKGRRNKKKK. Positions 135 to 175 constitute an EGF-like domain; it reads KKNPCTAKFQNFCIHGECRYIENLEVVTCNCHQDYFGERCG. 3 disulfide bridges follow: C139-C152, C147-C163, and C165-C174. The chain crosses the membrane as a helical span at residues 192-215; the sequence is IAVVAVTIFVSAIILAAIGIGIVI. An N-linked (GlcNAc...) asparagine glycan is attached at N241.

Belongs to the amphiregulin family. The immature precursor interacts with CNIH.

The protein localises to the membrane. Functionally, ligand of the EGF receptor/EGFR. Autocrine growth factor as well as a mitogen for a broad range of target cells including astrocytes, Schwann cells and fibroblasts. The chain is Amphiregulin (Areg) from Mus musculus (Mouse).